The chain runs to 137 residues: DNA-binding protein H-NS (137 aa).

Residues 112–117 (QGRTPA) mediate DNA binding.

The protein belongs to the histone-like protein H-NS family. In terms of assembly, homodimer that oligomerizes on DNA into higher-order complexes that form bridges between disparate regions of DNA compacting it. Interacts with Hha, YdgT and StpA.

The protein resides in the cytoplasm. Its subcellular location is the nucleoid. In terms of biological role, a DNA-binding protein implicated in transcriptional repression and chromosome organization and compaction. Binds nucleation sites in AT-rich DNA and bridges them, forming higher-order nucleoprotein complexes and condensing the chromosome. As many horizontally transferred genes are AT-rich, it plays a central role in silencing foreign genes. A subset of genes are repressed by H-NS in association with other proteins. The sequence is that of DNA-binding protein H-NS (hns) from Salmonella paratyphi A (strain ATCC 9150 / SARB42).